A 533-amino-acid chain; its full sequence is Large neutral amino acids transporter small subunit 2 (533 aa).

Residues 1 to 33 are disordered; that stretch reads MEKGTRQRNNTAKNHPDRGSDTSPEAEASSGGG. The Cytoplasmic portion of the chain corresponds to 1 to 45; sequence MEKGTRQRNNTAKNHPDRGSDTSPEAEASSGGGGVALKKEIGLVS. 4 positions are modified to phosphoserine: Ser-20, Ser-23, Ser-29, and Ser-30. Residues 46 to 66 form a helical membrane-spanning segment; sequence ACGIIVGNIIGSGIFVSPKGV. Ile-54 serves as a coordination point for L-leucine. At 67–74 the chain is on the extracellular side; it reads LENAGSVG. The helical transmembrane segment at 75 to 96 threads the bilayer; the sequence is LALIVWIVTGVITAVGALCYAE. The Cytoplasmic portion of the chain corresponds to 97-117; the sequence is LGVTIPKSGGDYSYVKDIFGG. Residues 118–150 form a helical membrane-spanning segment; it reads LAGFLRLWIAVLVIYPTNQAVIALTFSNYVLQP. An L-tryptophan-binding site is contributed by Asn-135. The Extracellular portion of the chain corresponds to 151 to 158; the sequence is LFPTCFPP. Residues 159-179 form a helical membrane-spanning segment; it reads ESGLRLLAAICLLLLTWVNCS. The Cytoplasmic segment spans residues 180–182; sequence SVR. The chain crosses the membrane as a helical span at residues 183–211; the sequence is WATRVQDIFTAGKLLALALIIIMGVVQIC. Residues 212-231 are Extracellular-facing; it reads KGEFFWLEPKNAFENFQEPD. Residues 232–253 form a helical membrane-spanning segment; sequence IGLVALAFLQGSFAYGGWNFLN. Gly-247 provides a ligand contact to L-leucine. At 254–266 the chain is on the cytoplasmic side; sequence YVTEELVDPYKNL. A helical transmembrane segment spans residues 267-288; the sequence is PRAIFISIPLVTFVYVFANIAY. Topologically, residues 289-313 are extracellular; the sequence is VTAMSPQELLASNAVAVTFGEKLLG. Residues 314–339 traverse the membrane as a helical segment; sequence VMAWIMPISVALSTFGGVNGSLFTSS. The Cytoplasmic segment spans residues 340-365; the sequence is RLFFAGAREGHLPSVLAMIHVKRCTP. A helical transmembrane segment spans residues 366–383; it reads IPALLFTCLSTLLMLVTS. At 384–387 the chain is on the extracellular side; the sequence is DMYT. The helical transmembrane segment at 388–409 threads the bilayer; the sequence is LINYVGFINYLFYGVTVAGQIV. An L-tryptophan-binding site is contributed by Asn-396. Residues 410–424 are Cytoplasmic-facing; sequence LRWKKPDIPRPIKIS. The next 2 helical transmembrane spans lie at 425–447 and 448–467; these read LLFP…WSEP and VVCG…YFLG. Topologically, residues 468-533 are cytoplasmic; it reads VYWQHKPKCF…VKDPDSEEQP (66 aa). The tract at residues 500 to 533 is disordered; it reads GDSGTEETIDDVEEQHKPIFQPTPVKDPDSEEQP. Acidic residues predominate over residues 502 to 512; sequence SGTEETIDDVE. Ser-529 is subject to Phosphoserine.

This sequence belongs to the amino acid-polyamine-organocation (APC) superfamily. L-type amino acid transporter (LAT) (TC 2.A.3.8) family. Disulfide-linked heterodimer composed of the catalytic light chain subunit SLC7A8 and the heavy chain subunit SLC3A2. SLC3A2 acts as a chaperone for correct plasma membrane trafficking and stabilization of SLC7A8 and modulates the substrate affinity and specificity of SLC7A8. ICAM-1 associates with the heterodimer SLC3A2/SLC7A8; facilitates leucine uptake. In terms of tissue distribution, expression is seen in jejunum mucosa and the epithelial cells of the jejunum, ileum and colon, as well as in kidney, placenta, brain, testis and skeletal muscle. Expressed in retina, inner blood-retinal barrier of retina, retinal vascular endothelial cells. Also expressed in the intestinal epithelial cell line IEC-6 and in the retinal capillary endothelial cell line TR-iBRB2.

The protein localises to the cell membrane. The protein resides in the basolateral cell membrane. It catalyses the reaction L-dopa(out) + L-phenylalanine(in) = L-dopa(in) + L-phenylalanine(out). It carries out the reaction 3,3'-diiodo-L-thyronine(out) = 3,3'-diiodo-L-thyronine(in). The enzyme catalyses L-histidine(in) + L-phenylalanine(out) = L-histidine(out) + L-phenylalanine(in). The catalysed reaction is L-tryptophan(in) + L-phenylalanine(out) = L-tryptophan(out) + L-phenylalanine(in). It catalyses the reaction L-isoleucine(in) + L-phenylalanine(out) = L-isoleucine(out) + L-phenylalanine(in). It carries out the reaction L-valine(in) + L-phenylalanine(out) = L-valine(out) + L-phenylalanine(in). The enzyme catalyses L-leucine(in) + L-phenylalanine(out) = L-leucine(out) + L-phenylalanine(in). The catalysed reaction is L-glutamine(in) + L-phenylalanine(out) = L-glutamine(out) + L-phenylalanine(in). It catalyses the reaction L-cysteine(in) + L-phenylalanine(out) = L-cysteine(out) + L-phenylalanine(in). It carries out the reaction L-phenylalanine(out) + L-methionine(in) = L-phenylalanine(in) + L-methionine(out). The enzyme catalyses L-leucine(out) + L-methionine(in) = L-leucine(in) + L-methionine(out). The catalysed reaction is L-cysteine(out) + L-methionine(in) = L-cysteine(in) + L-methionine(out). It catalyses the reaction S-methylmercury-L-cysteine(out) + L-methionine(in) = S-methylmercury-L-cysteine(in) + L-methionine(out). It carries out the reaction S-methylmercury-L-cysteine(in) + L-leucine(out) = S-methylmercury-L-cysteine(out) + L-leucine(in). The enzyme catalyses S-methylmercury-L-cysteine(in) + L-phenylalanine(out) = S-methylmercury-L-cysteine(out) + L-phenylalanine(in). The catalysed reaction is L-phenylalanine(out) + L-serine(in) = L-phenylalanine(in) + L-serine(out). It catalyses the reaction L-phenylalanine(out) + glycine(in) = L-phenylalanine(in) + glycine(out). It carries out the reaction L-phenylalanine(out) + L-alanine(in) = L-phenylalanine(in) + L-alanine(out). The enzyme catalyses 3,3',5-triiodo-L-thyronine(out) = 3,3',5-triiodo-L-thyronine(in). Leucine transport activity is inhibited by 2-amino-bicyclo-(2,2,1)-heptane-2-carboxylate (BCH), glycine, L-isomers of the neutral amino acids and histidine. Functionally, associates with SLC3A2 to form a functional heterodimeric complex that translocates small and large neutral amino acids with broad specificity and a stoichiometry of 1:1. Functions as amino acid antiporter mediating the influx of extracellular essential amino acids mainly in exchange with the efflux of highly concentrated intracellular amino acids. Has relatively symmetrical selectivities but strongly asymmetrical substrate affinities at both the intracellular and extracellular sides of the transporter. This asymmetry allows SLC7A8 to regulate intracellular amino acid pools (mM concentrations) by exchange with external amino acids (uM concentration range), equilibrating the relative concentrations of different amino acids across the plasma membrane instead of mediating their net uptake. May play an essential role in the reabsorption of neutral amino acids from the epithelial cells to the bloodstream in the kidney. Involved in the uptake of methylmercury (MeHg) when administered as the L-cysteine or D,L-homocysteine complexes, and hence plays a role in metal ion homeostasis and toxicity. Involved in the cellular activity of small molecular weight nitrosothiols, via the stereoselective transport of L-nitrosocysteine (L-CNSO) across the transmembrane. Imports the thyroid hormone diiodothyronine (T2) and to a smaller extent triiodothyronine (T3) but not rT 3 or thyroxine (T4). Mediates the uptake of L-DOPA. May participate in auditory function. This chain is Large neutral amino acids transporter small subunit 2 (Slc7a8), found in Rattus norvegicus (Rat).